The primary structure comprises 220 residues: ATP-dependent Clp protease proteolytic subunit (220 aa).

Ser-122 (nucleophile) is an active-site residue. His-147 is a catalytic residue.

This sequence belongs to the peptidase S14 family. As to quaternary structure, fourteen ClpP subunits assemble into 2 heptameric rings which stack back to back to give a disk-like structure with a central cavity, resembling the structure of eukaryotic proteasomes.

The protein resides in the cytoplasm. It carries out the reaction Hydrolysis of proteins to small peptides in the presence of ATP and magnesium. alpha-casein is the usual test substrate. In the absence of ATP, only oligopeptides shorter than five residues are hydrolyzed (such as succinyl-Leu-Tyr-|-NHMec, and Leu-Tyr-Leu-|-Tyr-Trp, in which cleavage of the -Tyr-|-Leu- and -Tyr-|-Trp bonds also occurs).. Functionally, cleaves peptides in various proteins in a process that requires ATP hydrolysis. Has a chymotrypsin-like activity. Plays a major role in the degradation of misfolded proteins. This Colwellia psychrerythraea (strain 34H / ATCC BAA-681) (Vibrio psychroerythus) protein is ATP-dependent Clp protease proteolytic subunit.